A 338-amino-acid chain; its full sequence is MKLAVIAGDGIGTEVTAEALKVLHALRDDVETTDYDLGARRYLRNGELLTDEDLDSLREHDAILLGAIGDPRTVPAGVLERGLLLPLRFKLDHAVNLRPSKLYPGSSSPLANPGDIDFVVVREGTEGLYCGNGGTLRAGTDYEVASEVSQNTYYGVERVVRDAFERAQSRRKKLTWVHKTNVLVNAGSLWQRAIETVGQEYPEVQVDYNHIDAATIYMVTKPQEYDVIVTDNLFGDILTDLAGAVTGGIGLAASGNIDPSRKNPSMFEPVHGSAPDIAGQGIADPCAAILSVALMLRHLGDDANAERIEAAVLAEAGSRDGGPVKTAEVGDRVVANLK.

Positions 88, 98, 122, and 212 each coordinate substrate. Residues aspartate 212, aspartate 236, and aspartate 240 each contribute to the Mg(2+) site. 272–284 (GSAPDIAGQGIAD) serves as a coordination point for NAD(+).

It belongs to the isocitrate and isopropylmalate dehydrogenases family. LeuB type 2 subfamily. As to quaternary structure, homodimer. Mg(2+) serves as cofactor. The cofactor is Mn(2+).

It localises to the cytoplasm. The enzyme catalyses (2R,3S)-3-isopropylmalate + NAD(+) = 4-methyl-2-oxopentanoate + CO2 + NADH. It participates in amino-acid biosynthesis; L-leucine biosynthesis; L-leucine from 3-methyl-2-oxobutanoate: step 3/4. Catalyzes the oxidation of 3-carboxy-2-hydroxy-4-methylpentanoate (3-isopropylmalate) to 3-carboxy-4-methyl-2-oxopentanoate. The product decarboxylates to 4-methyl-2 oxopentanoate. In Corynebacterium jeikeium (strain K411), this protein is 3-isopropylmalate dehydrogenase.